Here is a 342-residue protein sequence, read N- to C-terminus: N-acetyl-gamma-glutamyl-phosphate reductase (342 aa).

Cysteine 149 is an active-site residue.

This sequence belongs to the NAGSA dehydrogenase family. Type 1 subfamily.

Its subcellular location is the cytoplasm. The catalysed reaction is N-acetyl-L-glutamate 5-semialdehyde + phosphate + NADP(+) = N-acetyl-L-glutamyl 5-phosphate + NADPH + H(+). It participates in amino-acid biosynthesis; L-arginine biosynthesis; N(2)-acetyl-L-ornithine from L-glutamate: step 3/4. Its function is as follows. Catalyzes the NADPH-dependent reduction of N-acetyl-5-glutamyl phosphate to yield N-acetyl-L-glutamate 5-semialdehyde. The chain is N-acetyl-gamma-glutamyl-phosphate reductase from Cereibacter sphaeroides (strain ATCC 17029 / ATH 2.4.9) (Rhodobacter sphaeroides).